The primary structure comprises 484 residues: Rho guanine nucleotide exchange factor 35 (484 aa).

Positions 139–418 (FSSDLGSEEE…ALIAPEDSPH (280 aa)) are disordered. Ser184 carries the post-translational modification Phosphoserine. Residues 217–237 (ESQGLLHPQEVQVLEEQGQQE) show a composition bias toward low complexity. Basic and acidic residues predominate over residues 266 to 278 (NDEKGEQKQKQEQ). Positions 299-309 (GLNDGEWEQED) are enriched in acidic residues. 2 stretches are compositionally biased toward basic and acidic residues: residues 323-368 (GEER…KEKG) and 394-404 (RSREEENEHHG).

This is Rho guanine nucleotide exchange factor 35 (ARHGEF35) from Homo sapiens (Human).